The primary structure comprises 687 residues: E3 ubiquitin-protein ligase RNF19B (687 aa).

The segment at 1–294 is required for ubiquitin ligase activity and for protection against staurosporin-induced cell death; that stretch reads MRLRNDCLVR…VCGCEFCWLC (294 aa). Residues 53 to 88 are disordered; sequence RTRAAPEPSVPSPPPSPPPPPPPPVSVPPPPSSPGG. Residues 60 to 85 show a composition bias toward pro residues; sequence PSVPSPPPSPPPPPPPPVSVPPPPSS. A TRIAD supradomain region spans residues 91-313; sequence SLIECPLCLV…LSPSGCTFWG (223 aa). Zn(2+) is bound by residues cysteine 95, cysteine 98, cysteine 118, cysteine 121, cysteine 182, cysteine 187, cysteine 204, cysteine 209, cysteine 214, cysteine 217, histidine 222, cysteine 227, cysteine 263, and cysteine 266. An RING-type 1 zinc finger spans residues 95-144; sequence CPLCLVRQPPEEIPELLSCRHRSCLRCLRQYLRIEICESRVNLRCPECAE. The IBR-type zinc-finger motif lies at 161–227; sequence TRKYEEFLLR…KHVWHPNQTC (67 aa). Residues 263–294 form an RING-type 2; atypical zinc finger; that stretch reads CPRCSAYIIKMNDGSCNHMTCSVCGCEFCWLC. Cysteine 278 is an active-site residue. Residues cysteine 283, cysteine 286, cysteine 291, cysteine 294, histidine 302, and cysteine 309 each contribute to the Zn(2+) site. 2 helical membrane-spanning segments follow: residues 330-350 and 391-411; these read LIGAPVGISLIAGIAIPAMVI and VVAAVSVGIGVPIMLAYVYGV. The tract at residues 618–662 is disordered; it reads SIRSDLESSDAQSDDVPDLASEEYDSPHLFPPSPSNALQESPPHR. The segment covering 629–641 has biased composition (acidic residues); it reads QSDDVPDLASEEY.

The protein belongs to the RBR family. RNF19 subfamily. As to quaternary structure, interacts with UBE2L3, UBE2L6 and UCKL1.

Its subcellular location is the cytoplasmic granule membrane. It localises to the endoplasmic reticulum membrane. It carries out the reaction [E2 ubiquitin-conjugating enzyme]-S-ubiquitinyl-L-cysteine + [acceptor protein]-L-lysine = [E2 ubiquitin-conjugating enzyme]-L-cysteine + [acceptor protein]-N(6)-ubiquitinyl-L-lysine.. Its pathway is protein modification; protein ubiquitination. E3 ubiquitin-protein ligase which accepts ubiquitin from E2 ubiquitin-conjugating enzymes UBE2L3 and UBE2L6 in the form of a thioester and then directly transfers the ubiquitin to targeted substrates, such as UCKL1. Involved in the cytolytic activity of natural killer cells and cytotoxic T-cells. Protects against staurosporin-induced cell death. The chain is E3 ubiquitin-protein ligase RNF19B (rnf19b) from Xenopus laevis (African clawed frog).